Reading from the N-terminus, the 201-residue chain is Peptidyl-tRNA hydrolase (201 aa).

TRNA is bound at residue Tyr-14. His-19 functions as the Proton acceptor in the catalytic mechanism. Residues Tyr-64, Asn-66, and Asn-112 each contribute to the tRNA site.

It belongs to the PTH family. In terms of assembly, monomer.

It localises to the cytoplasm. It catalyses the reaction an N-acyl-L-alpha-aminoacyl-tRNA + H2O = an N-acyl-L-amino acid + a tRNA + H(+). Its function is as follows. Hydrolyzes ribosome-free peptidyl-tRNAs (with 1 or more amino acids incorporated), which drop off the ribosome during protein synthesis, or as a result of ribosome stalling. Functionally, catalyzes the release of premature peptidyl moieties from peptidyl-tRNA molecules trapped in stalled 50S ribosomal subunits, and thus maintains levels of free tRNAs and 50S ribosomes. This is Peptidyl-tRNA hydrolase from Bradyrhizobium diazoefficiens (strain JCM 10833 / BCRC 13528 / IAM 13628 / NBRC 14792 / USDA 110).